Here is a 284-residue protein sequence, read N- to C-terminus: Release factor glutamine methyltransferase (284 aa).

Residues 125 to 129 (GVGSG), Glu148, and Asn190 each bind S-adenosyl-L-methionine. 190-193 (NPPY) is a binding site for substrate.

It belongs to the protein N5-glutamine methyltransferase family. PrmC subfamily.

It carries out the reaction L-glutaminyl-[peptide chain release factor] + S-adenosyl-L-methionine = N(5)-methyl-L-glutaminyl-[peptide chain release factor] + S-adenosyl-L-homocysteine + H(+). In terms of biological role, methylates the class 1 translation termination release factors RF1/PrfA and RF2/PrfB on the glutamine residue of the universally conserved GGQ motif. This is Release factor glutamine methyltransferase from Geobacter sulfurreducens (strain ATCC 51573 / DSM 12127 / PCA).